We begin with the raw amino-acid sequence, 361 residues long: Cysteine-rich with EGF-like domain protein 2-B (361 aa).

Residues 1–24 form the signal peptide; that stretch reads MNGSRAWRLAAWLLLCLSCSAAVA. In terms of domain architecture, EGF-like 1 spans 134-176; that stretch reads DCLACLGGSERPCHGNGFCSGDGTRSGDGSCRCKAEYTGSFCL. 3 disulfide bridges follow: Cys138/Cys152, Cys146/Cys164, and Cys166/Cys175. Asn188 carries N-linked (GlcNAc...) asparagine glycosylation. FU repeat units lie at residues 191–238 and 251–298; these read HAVC…EESP and SFLC…SEKL. Positions 288–329 constitute an EGF-like 2; calcium-binding domain; the sequence is DVDECDASEKLCLRENEVCLNTAGSYKCTCSEGFEDKEGNCV. 3 cysteine pairs are disulfide-bonded: Cys292–Cys306, Cys299–Cys315, and Cys317–Cys328. The disordered stretch occupies residues 339–361; the sequence is ITEGETGTPASDTNILNTAHEDL. Polar residues predominate over residues 346 to 355; it reads TPASDTNILN.

Belongs to the CRELD family.

It localises to the secreted. The protein resides in the endoplasmic reticulum. Functionally, possible role in neuronal acetylcholine receptor transport. This is Cysteine-rich with EGF-like domain protein 2-B (creld2-b) from Xenopus laevis (African clawed frog).